The following is a 280-amino-acid chain: Phospholipase C D (280 aa).

Residues 258–280 form a disordered region; that stretch reads VPDPQIMPTQETTPTRGIPSGPC.

Belongs to the bacterial phospholipase C family.

It localises to the secreted. The protein resides in the cell wall. It carries out the reaction a 1,2-diacyl-sn-glycero-3-phosphocholine + H2O = phosphocholine + a 1,2-diacyl-sn-glycerol + H(+). The catalysed reaction is 1,2-dihexadecanoyl-sn-glycero-3-phosphocholine + H2O = 1,2-dihexadecanoyl-sn-glycerol + phosphocholine + H(+). Involved in virulence. Induces cytotoxic effects on mouse macrophage cell lines, via direct or indirect enzymatic hydrolysis of cell membrane phospholipids. Hydrolyzes phosphatidylcholine. Does not have hemolytic activity. This chain is Phospholipase C D, found in Mycobacterium tuberculosis (strain ATCC 25618 / H37Rv).